We begin with the raw amino-acid sequence, 192 residues long: Charged multivesicular body protein 1 (192 aa).

Coiled-coil stretches lie at residues 7–35 (QLKFTSKQLEKQSKKSEQSEKAQKIKLKK) and 102–125 (NMDLEKITQVMDQFERQFEDLDVQ). Positions 164–192 (QMGSAPSEKVQQGETDELTERLNRLKQKN) are disordered.

This sequence belongs to the SNF7 family. Probable peripherally associated component of the endosomal sorting required for transport complex III (ESCRT-III).

The protein localises to the endosome membrane. Probable peripherally associated component of the endosomal sorting required for transport complex III (ESCRT-III) which is involved in multivesicular bodies (MVBs) formation and sorting of endosomal cargo proteins into MVBs. MVBs contain intraluminal vesicles (ILVs) that are generated by invagination and scission from the limiting membrane of the endosome and are delivered to lysosomes enabling degradation of membrane proteins. The protein is Charged multivesicular body protein 1 (chmp1) of Dictyostelium discoideum (Social amoeba).